Here is a 427-residue protein sequence, read N- to C-terminus: Serine hydroxymethyltransferase (427 aa).

Residues L122 and 126–128 each bind (6S)-5,6,7,8-tetrahydrofolate; that span reads GHL. Residue K231 is modified to N6-(pyridoxal phosphate)lysine. 355 to 357 contacts (6S)-5,6,7,8-tetrahydrofolate; it reads SPF.

The protein belongs to the SHMT family. Homodimer. Pyridoxal 5'-phosphate is required as a cofactor.

It localises to the cytoplasm. The enzyme catalyses (6R)-5,10-methylene-5,6,7,8-tetrahydrofolate + glycine + H2O = (6S)-5,6,7,8-tetrahydrofolate + L-serine. It participates in one-carbon metabolism; tetrahydrofolate interconversion. It functions in the pathway amino-acid biosynthesis; glycine biosynthesis; glycine from L-serine: step 1/1. In terms of biological role, catalyzes the reversible interconversion of serine and glycine with tetrahydrofolate (THF) serving as the one-carbon carrier. This reaction serves as the major source of one-carbon groups required for the biosynthesis of purines, thymidylate, methionine, and other important biomolecules. Also exhibits THF-independent aldolase activity toward beta-hydroxyamino acids, producing glycine and aldehydes, via a retro-aldol mechanism. The sequence is that of Serine hydroxymethyltransferase from Nostoc punctiforme (strain ATCC 29133 / PCC 73102).